Reading from the N-terminus, the 122-residue chain is Large ribosomal subunit protein uL14 (122 aa).

It belongs to the universal ribosomal protein uL14 family. As to quaternary structure, part of the 50S ribosomal subunit. Forms a cluster with proteins L3 and L19. In the 70S ribosome, L14 and L19 interact and together make contacts with the 16S rRNA in bridges B5 and B8.

Its function is as follows. Binds to 23S rRNA. Forms part of two intersubunit bridges in the 70S ribosome. This is Large ribosomal subunit protein uL14 from Ralstonia nicotianae (strain ATCC BAA-1114 / GMI1000) (Ralstonia solanacearum).